Consider the following 381-residue polypeptide: Cytochrome b (381 aa).

A run of 4 helical transmembrane segments spans residues 33-53 (FGSLLGMCLIIQILTGLFLAM), 77-98 (WLLRNLHANGASMFFMCLFLHV), 113-133 (WNIGVILLLTVMATAFVGYVL), and 178-198 (FFAFHFILPFIIMALAVVHLL). Heme b-binding residues include His83 and His97. Heme b contacts are provided by His182 and His196. His201 lines the a ubiquinone pocket. 4 helical membrane passes run 226 to 246 (IKDALGFMLLLLVLLLLALFS), 288 to 308 (LGGVLAVLASILILLIIPLLH), 320 to 340 (VSQTLFWILTANLITLTWIGG), and 347 to 367 (FIIIGQLAPMPYFLLILVMMP).

The protein belongs to the cytochrome b family. In terms of assembly, the cytochrome bc1 complex contains 11 subunits: 3 respiratory subunits (MT-CYB, CYC1 and UQCRFS1), 2 core proteins (UQCRC1 and UQCRC2) and 6 low-molecular weight proteins (UQCRH/QCR6, UQCRB/QCR7, UQCRQ/QCR8, UQCR10/QCR9, UQCR11/QCR10 and a cleavage product of UQCRFS1). This cytochrome bc1 complex then forms a dimer. Heme b is required as a cofactor.

The protein localises to the mitochondrion inner membrane. Its function is as follows. Component of the ubiquinol-cytochrome c reductase complex (complex III or cytochrome b-c1 complex) that is part of the mitochondrial respiratory chain. The b-c1 complex mediates electron transfer from ubiquinol to cytochrome c. Contributes to the generation of a proton gradient across the mitochondrial membrane that is then used for ATP synthesis. This chain is Cytochrome b (MT-CYB), found in Dasyurus hallucatus (Northern quoll).